A 974-amino-acid polypeptide reads, in one-letter code: GATOR2 complex protein WDR59 (974 aa).

WD repeat units follow at residues 57–98 (QSKW…GEVG), 103–143 (GHTR…KPTV), 146–185 (SAVA…TAVE), 189–229 (AHLS…KYLN), 232–276 (PCQV…TPVH), 278–318 (FVGH…RVDS), and 319–362 (QMQR…TASH). A disordered region spans residues 350–374 (HTEDTDHQHTASHGEEEALKEDPPR). The RWD domain occupies 393–494 (QEFSLINVQI…RQLVSCLESF (102 aa)). At serine 564 the chain carries Phosphoserine. The stretch at 668-706 (LNVNDIQETCQKNAASALLVGRKDLVQVWSLATVATDLC) is one WD 8 repeat. 3 positions are modified to phosphoserine: serine 821, serine 822, and serine 830. A disordered region spans residues 831–852 (LTYSDPRERERDQHDKNKRLLD). The span at 835 to 851 (DPRERERDQHDKNKRLL) shows a compositional bias: basic and acidic residues. The C4-type zinc-finger motif lies at 901 to 920 (YCSHCRSEVRGTQCAICKGF). Residues cysteine 902, cysteine 905, cysteine 914, cysteine 917, cysteine 927, cysteine 938, histidine 943, histidine 946, histidine 949, cysteine 960, cysteine 964, cysteine 966, and cysteine 968 each contribute to the Zn(2+) site. The RING-type; atypical zinc finger occupies 921 to 973 (TFQCAICHVAVRGSSNFCLTCGHGGHTSHMMEWFRTQEVCPTGCGCHCLLEST).

This sequence belongs to the WD repeat WDR59 family. Component of the GATOR2 subcomplex, composed of MIOS, SEC13, SEH1L, WDR24 and WDR59. The GATOR2 complex interacts with CASTOR1 and CASTOR2; the interaction is negatively regulated by arginine. The GATOR2 complex interacts with SESN1, SESN2 and SESN3; the interaction is negatively regulated by amino acids. Interacts with DDB1-CUL4A/B E3 ligase complexes.

Its subcellular location is the lysosome membrane. The GATOR2 complex is negatively regulated by the upstream amino acid sensors CASTOR1 and SESN2, which sequester the GATOR2 complex in absence of amino acids. In the presence of abundant amino acids, GATOR2 is released from CASTOR1 and SESN2 and activated. Functionally, as a component of the GATOR2 complex, functions as an activator of the amino acid-sensing branch of the mTORC1 signaling pathway. The GATOR2 complex indirectly activates mTORC1 through the inhibition of the GATOR1 subcomplex. GATOR2 probably acts as an E3 ubiquitin-protein ligase toward GATOR1. In the presence of abundant amino acids, the GATOR2 complex mediates ubiquitination of the NPRL2 core component of the GATOR1 complex, leading to GATOR1 inactivation. In the absence of amino acids, GATOR2 is inhibited, activating the GATOR1 complex. The chain is GATOR2 complex protein WDR59 from Homo sapiens (Human).